The sequence spans 118 residues: Histone H2B.N (118 aa).

The protein belongs to the histone H2B family. The nucleosome is a histone octamer containing two molecules each of H2A, H2B, H3 and H4 assembled in one H3-H4 heterotetramer and two H2A-H2B heterodimers. The octamer wraps approximately 147 bp of DNA. As to expression, expressed in germline. Predominantly expressed in oocytes.

The protein resides in the nucleus. It is found in the chromosome. Functionally, core component of nucleosome. Nucleosomes wrap and compact DNA into chromatin, limiting DNA accessibility to the cellular machineries which require DNA as a template. Histones thereby play a central role in transcription regulation, DNA repair, DNA replication and chromosomal stability. DNA accessibility is regulated via a complex set of post-translational modifications of histones, also called histone code, and nucleosome remodeling. The protein is Histone H2B.N of Homo sapiens (Human).